A 560-amino-acid polypeptide reads, in one-letter code: Synaptotagmin-5 (560 aa).

The chain crosses the membrane as a helical span at residues 2 to 22; it reads GFIVGVVIGLLVGIAIIIGFV. The 183-residue stretch at 67–249 folds into the SMP-LTD domain; that stretch reads ERQKLTWLNH…WPVRKVIPII (183 aa). Positions 227-523 are phospholipid binding; that stretch reads EETIRDAVED…YIGRCILTLT (297 aa). C2 domains are found at residues 243-364 and 417-535; these read RKVI…DVWL and TTDE…KDWY. Residues Asp-278, Asp-284, Asp-334, Glu-336, Asp-451, Asp-457, Asp-506, Asp-508, and Asp-513 each coordinate Ca(2+).

This sequence belongs to the synaptotagmin family. Ca(2+) is required as a cofactor.

It is found in the membrane. In terms of biological role, may be involved in membrane trafficking. The polypeptide is Synaptotagmin-5 (SYT5) (Arabidopsis thaliana (Mouse-ear cress)).